Here is a 353-residue protein sequence, read N- to C-terminus: UPF0283 membrane protein YcjF (353 aa).

A run of 3 helical transmembrane segments spans residues 70-90 (MVMGGLALFGASVVGQGVQWT), 100-120 (VALGGCAAGALIIGAGVGSVV), and 213-233 (ESTLMIAVSPLALVDMAFIAW).

The protein belongs to the UPF0283 family.

Its subcellular location is the cell inner membrane. The sequence is that of UPF0283 membrane protein YcjF from Shigella boydii serotype 4 (strain Sb227).